Consider the following 188-residue polypeptide: MAAELEGSKALGGLLSGLAQEAFHGHHGITEELLRSQLYPEVSLEEFRPFLAKMRGILKSIASADMDFNQLEAFLTAQTKKQGGITSDQAAVISKFWKNHKTKIRESLMNQSRWDSGLRGLSWRVDGKSQSRHSAQIHTPVAIMELEIGKSGQESEFLCLEFDEVKVSQLLKKLSEVEESISTLMQPA.

Residues 1 to 122 (MAAELEGSKA…RWDSGLRGLS (122 aa)) are sufficient for interaction with SLC12A2. Residues His100, Met109, and His133 each contribute to the Cu cation site. The 69-residue stretch at 117 to 185 (GLRGLSWRVD…EVEESISTLM (69 aa)) folds into the COMM domain. A required for binding to PtdIns(4,5)P2 region spans residues 124 to 188 (RVDGKSQSRH…ESISTLMQPA (65 aa)).

Belongs to the COMM domain-containing protein 1 family. Component of the commander complex consisting of the CCC subcomplex and the retriever subcomplex. Component of the CCC (COMMD/CCDC22/CCDC93) subcomplex consisting of COMMD1, COMMD2, COMMD3, COMMD4, COMMD5, COMMD6, COMMD7, COMMD8, COMMD9, COMMD10, CCDC22 and CCDC93; within the complex forms a heterodimer with COMMD6. Interacts with VPS35L; the interaction associates the CCC complex with the retriever complex. Identified in a complex with an E3 ubiquitin ligase complex composed of TCEB1/elongin C, CUL2, SOCS1 and RBX1; in the complex interacts directly with SOCS1 and CUL2. Identified in a complex with NF-kappa-B. Interacts directly with SLC12A2. Interacts directly with ATP7B (via the N-terminal region). Interacts with ATP7A. Interacts with FAM107A; this interaction stabilizes COMMD1 in the nucleus. Interacts with CCS, CDKN2A, RELA, REL, RELB, NFKB1/p105, NFKB2/p100, NFKBIB, SCNN1D, SCNN1B, CFTR, CLU, SGK1, AKT1, CUL1, CUL2, CUL3, CUL4A, CUL4B, CUL5, CUL7, HIF1A. Ubiquitinated; undergoes both 'Lys-63'- and 'Lys-48'-linked polyubiquitination. Ubiquitinated by XIAP, leading to its proteasomal degradation.

Its subcellular location is the nucleus. It is found in the cytoplasm. The protein resides in the endosome membrane. It localises to the cytoplasmic vesicle. The protein localises to the early endosome. Its subcellular location is the recycling endosome. Functionally, scaffold protein in the commander complex that is essential for endosomal recycling of transmembrane cargos; the commander complex is composed of the CCC subcomplex and the retriever subcomplex. Can modulate activity of cullin-RING E3 ubiquitin ligase (CRL) complexes by displacing CAND1; in vitro promotes CRL E3 activity and dissociates CAND1 from CUL1 and CUL2. Promotes ubiquitination of NF-kappa-B subunit RELA and its subsequent proteasomal degradation. Down-regulates NF-kappa-B activity. Involved in the regulation of membrane expression and ubiquitination of SLC12A2. Modulates Na(+) transport in epithelial cells by regulation of apical cell surface expression of amiloride-sensitive sodium channel (ENaC) subunits and by promoting their ubiquitination presumably involving NEDD4L. Promotes the localization of SCNN1D to recycling endosomes. Promotes CFTR cell surface expression through regulation of its ubiquitination. Down-regulates SOD1 activity by interfering with its homodimerization. Plays a role in copper ion homeostasis. Involved in copper-dependent ATP7A trafficking between the trans-Golgi network and vesicles in the cell periphery; the function is proposed to depend on its association within the CCC complex and cooperation with the WASH complex on early endosomes. Can bind one copper ion per monomer. May function to facilitate biliary copper excretion within hepatocytes. Binds to phosphatidylinositol 4,5-bisphosphate (PtdIns(4,5)P2). Involved in the regulation of HIF1A-mediated transcription; competes with ARNT/Hif-1-beta for binding to HIF1A resulting in decreased DNA binding and impaired transcriptional activation by HIF-1. Negatively regulates neuroblastoma G1/S phase cell cycle progression and cell proliferation by stimulating ubiquitination of NF-kappa-B subunit RELA and NF-kappa-B degradation in a FAM107A- and actin-dependent manner. This chain is COMM domain-containing protein 1 (COMMD1), found in Canis lupus familiaris (Dog).